A 118-amino-acid polypeptide reads, in one-letter code: MTRVKRGYVARRRRKNLFTLTSGFRGTHSKLFRTANQQGMRALVASYRGRVGRKKTLRRLWIVRINAAVRSDGISYNKLIQYLYKNQILLNRKILAQIAILDRFAFFLIIRSIQREEG.

It belongs to the bacterial ribosomal protein bL20 family.

The protein localises to the plastid. In terms of biological role, binds directly to 23S ribosomal RNA and is necessary for the in vitro assembly process of the 50S ribosomal subunit. It is not involved in the protein synthesizing functions of that subunit. The sequence is that of Large ribosomal subunit protein bL20c from Aneura mirabilis (Parasitic liverwort).